The primary structure comprises 535 residues: uncharacterized protein (535 aa).

The chain crosses the membrane as a helical span at residues 8-24; sequence LVVFGSLVFFFGLVKYF. Lys-50 participates in a covalent cross-link: Glycyl lysine isopeptide (Lys-Gly) (interchain with G-Cter in ubiquitin). The Mn(2+) site is built by Asp-316, Asp-327, His-412, Glu-452, and Glu-493.

This sequence belongs to the peptidase M24B family. The cofactor is Mn(2+).

The protein localises to the membrane. This is an uncharacterized protein from Saccharomyces cerevisiae (strain ATCC 204508 / S288c) (Baker's yeast).